Reading from the N-terminus, the 304-residue chain is ATP phosphoribosyltransferase (304 aa).

The protein belongs to the ATP phosphoribosyltransferase family. Long subfamily. Requires Mg(2+) as cofactor.

The protein localises to the cytoplasm. It catalyses the reaction 1-(5-phospho-beta-D-ribosyl)-ATP + diphosphate = 5-phospho-alpha-D-ribose 1-diphosphate + ATP. The protein operates within amino-acid biosynthesis; L-histidine biosynthesis; L-histidine from 5-phospho-alpha-D-ribose 1-diphosphate: step 1/9. Its activity is regulated as follows. Feedback inhibited by histidine. In terms of biological role, catalyzes the condensation of ATP and 5-phosphoribose 1-diphosphate to form N'-(5'-phosphoribosyl)-ATP (PR-ATP). Has a crucial role in the pathway because the rate of histidine biosynthesis seems to be controlled primarily by regulation of HisG enzymatic activity. The protein is ATP phosphoribosyltransferase of Xanthomonas campestris pv. campestris (strain 8004).